The sequence spans 441 residues: MATALSGGFSKNALFILSAALMLQAVLGDGKTLVLLDNPNIRDTHSIFFRSLADRGFDLTFKTADDPGLSLIKYGQFLYDHLILFSPSVEDFGGNINVETITAFIDGGGNVLVAASSDIGDPLRELGSECGIEFDEEKTAVIDHHNYDISDPGEHTLIVADPENLLKAPTIVGKPTDKPVLFKGVGMVADPDNPLVLDILTGSSTSYSYFPDRPITQYPHAVGKNTLLIAGLQARNNARVVFSGSLHFFSDAFFNSAVQKAATGSKRYEQTGNQDLAEALSRWVFKEAGVLRVGDVTHHPVGESTPPAAYTVTDLVEYGIVIEMLSGGKWVPFDGDDIQLEFVRIDPFVRTYLKKNGGKYSVQFKLPDVYGVFQFKVDYNRLGYTHLYSSTQVSVRPLQHTQYERFIPSAFPYYASAFSMMAGLFVFSVVFLHMREKEKSD.

The first 28 residues, 1–28 (MATALSGGFSKNALFILSAALMLQAVLG), serve as a signal peptide directing secretion. Over 29-410 (DGKTLVLLDN…TQYERFIPSA (382 aa)) the chain is Lumenal. Residues 411 to 431 (FPYYASAFSMMAGLFVFSVVF) form a helical membrane-spanning segment. At 432–441 (LHMREKEKSD) the chain is on the cytoplasmic side.

It belongs to the DDOST 48 kDa subunit family. In terms of assembly, component of the oligosaccharyltransferase (OST) complex.

The protein resides in the endoplasmic reticulum membrane. It functions in the pathway protein modification; protein glycosylation. Subunit of the oligosaccharyl transferase (OST) complex that catalyzes the initial transfer of a defined glycan (Glc(3)Man(9)GlcNAc(2) in eukaryotes) from the lipid carrier dolichol-pyrophosphate to an asparagine residue within an Asn-X-Ser/Thr consensus motif in nascent polypeptide chains, the first step in protein N-glycosylation. N-glycosylation occurs cotranslationally and the complex associates with the Sec61 complex at the channel-forming translocon complex that mediates protein translocation across the endoplasmic reticulum (ER). All subunits are required for a maximal enzyme activity. Required for the assembly of both SST3A- and SS3B-containing OST complexes. The chain is Dolichyl-diphosphooligosaccharide--protein glycosyltransferase 48 kDa subunit from Danio rerio (Zebrafish).